The primary structure comprises 127 residues: Large ribosomal subunit protein bL12 (127 aa).

The protein belongs to the bacterial ribosomal protein bL12 family. In terms of assembly, homodimer. Part of the ribosomal stalk of the 50S ribosomal subunit. Forms a multimeric L10(L12)X complex, where L10 forms an elongated spine to which 2 to 4 L12 dimers bind in a sequential fashion. Binds GTP-bound translation factors.

Forms part of the ribosomal stalk which helps the ribosome interact with GTP-bound translation factors. Is thus essential for accurate translation. The sequence is that of Large ribosomal subunit protein bL12 from Clavibacter michiganensis subsp. michiganensis (strain NCPPB 382).